Reading from the N-terminus, the 657-residue chain is Autophagy-related protein 22 (657 aa).

Residues 1 to 15 (MAPNLQPQPQSQLQR) show a composition bias toward low complexity. A disordered region spans residues 1–78 (MAPNLQPQPQ…VVPRHFGHDA (78 aa)). Topologically, residues 1–91 (MAPNLQPQPQ…SRRELLGWYA (91 aa)) are cytoplasmic. Residues 26 to 40 (GLSNISKRSFRSCAT) show a composition bias toward polar residues. A helical transmembrane segment spans residues 92-112 (YAFAAETYVICGIASFIPILL). The Vacuolar segment spans residues 113-155 (ETLARENGVLVSDRKTPCGSSDSKNDGDGQCIVWVFGMEINTA). Residues 156-176 (SFAMYTFSVSVLVQALLVVSI) traverse the membrane as a helical segment. Over 177-187 (SCAADHGNYRK) the chain is Cytoplasmic. A helical transmembrane segment spans residues 188-208 (KLLLTFAWIGSFAVMSYIFIT). Over 209–212 (KDNY) the chain is Vacuolar. A helical membrane pass occupies residues 213 to 233 (ILGALLTVISNTSFGASFVLL). The Cytoplasmic segment spans residues 234–317 (NSFLPLLVRY…ELELSTRISA (84 aa)). A helical transmembrane segment spans residues 318–338 (IGIGTGYIAALFLQCICIGVL). Topologically, residues 339–349 (ISLHNTTWGQR) are vacuolar. Residue Asn343 is glycosylated (N-linked (GlcNAc...) asparagine). A helical transmembrane segment spans residues 350-370 (VVLFMVGVWWTVFTIPAAMWL). Residues 371 to 384 (RPRPGPPLADNGRK) are Cytoplasmic-facing. A helical transmembrane segment spans residues 385 to 405 (GIMAGLAYILYAWKSLFKTIQ). Topologically, residues 406–409 (QARR) are vacuolar. Residues 410–430 (LLDIVLFLAGWFLLSDAIATT) traverse the membrane as a helical segment. Residues 431–446 (SSTAILFAKTQLHMKP) lie on the Cytoplasmic side of the membrane. A helical transmembrane segment spans residues 447–467 (WALGMINVISTTAGVFGAFGW). At 468–481 (SWVSRLFNLKAHQT) the chain is on the vacuolar side. A helical membrane pass occupies residues 482-502 (ILVCIALFELIPLYGLLGYLP). The Cytoplasmic portion of the chain corresponds to 503–515 (FVKNWGVFGLQQP). Residues 516–536 (WEMYPLAAVYGVVLGGLSGYC) traverse the membrane as a helical segment. At 537–554 (RSLYGELIPPGSEAAFYA) the chain is on the vacuolar side. The helical transmembrane segment at 555 to 575 (LYAITDKGSSVFGPTIVGAII) threads the bilayer. The Cytoplasmic segment spans residues 576-583 (DRTGTIRP). The helical transmembrane segment at 584–604 (AFWFLAVLVGFPAPLIWFIDV) threads the bilayer. Residues 605–657 (ERGRREGAKLAKSITDSIVQEEDESDDGAERRGMLSDYEREHGQSIDDERAGR) lie on the Vacuolar side of the membrane. The interval 615 to 657 (AKSITDSIVQEEDESDDGAERRGMLSDYEREHGQSIDDERAGR) is disordered. Over residues 632-657 (GAERRGMLSDYEREHGQSIDDERAGR) the composition is skewed to basic and acidic residues.

The protein belongs to the ATG22 family.

It is found in the vacuole membrane. In terms of biological role, vacuolar effluxer which mediate the efflux of leucine and other amino acids resulting from autophagic degradation. The release of autophagic amino acids allows the maintenance of protein synthesis and viability during nitrogen starvation. Autophagy is required for proper vegetative growth, asexual/sexual reproduction, and full virulence. Autophagy is particularly involved in the biosynthesis of deoxynivalenol (DON), an important virulence determinant. This chain is Autophagy-related protein 22, found in Gibberella zeae (strain ATCC MYA-4620 / CBS 123657 / FGSC 9075 / NRRL 31084 / PH-1) (Wheat head blight fungus).